The chain runs to 433 residues: Adenylosuccinate synthetase (433 aa).

GTP is bound by residues 11 to 17 (GDEGKGK) and 39 to 41 (GHT). Asp-12 acts as the Proton acceptor in catalysis. Residues Asp-12 and Gly-39 each contribute to the Mg(2+) site. IMP is bound by residues 12 to 15 (DEGK), 37 to 40 (NAGH), Thr-134, Arg-148, Asn-230, Thr-245, and Arg-309. His-40 acts as the Proton donor in catalysis. 305–311 (VTTGRKR) serves as a coordination point for substrate. Residues Arg-311, 337 to 339 (KLD), and 419 to 421 (GTG) contribute to the GTP site.

Belongs to the adenylosuccinate synthetase family. Homodimer. Mg(2+) is required as a cofactor.

Its subcellular location is the cytoplasm. It catalyses the reaction IMP + L-aspartate + GTP = N(6)-(1,2-dicarboxyethyl)-AMP + GDP + phosphate + 2 H(+). Its pathway is purine metabolism; AMP biosynthesis via de novo pathway; AMP from IMP: step 1/2. Functionally, plays an important role in the de novo pathway and in the salvage pathway of purine nucleotide biosynthesis. Catalyzes the first committed step in the biosynthesis of AMP from IMP. The sequence is that of Adenylosuccinate synthetase from Saccharomyces cerevisiae (strain JAY291) (Baker's yeast).